The primary structure comprises 410 residues: Scarecrow-like protein 32 (410 aa).

One can recognise a GRAS domain in the interval 18 to 408 (LRGCGDANFM…HSVVFATVWV (391 aa)). A leucine repeat I (LRI) region spans residues 25 to 88 (NFMEQLLLHC…AVSKTPTLSS (64 aa)). Residues 107–188 (LAAFVDLTPW…HFPPFINISY (82 aa)) are VHIID. A VHIID motif is present at residues 138-142 (VHIVD). Positions 190–227 (ELGSKLVNFATTRNITMEFTIVPSTYSDGFSSLLQQLR) are leucine repeat II (LRII). Residues 237-329 (LVVNCHMMLR…EAEISWKIEN (93 aa)) form a PFYRE region. Positions 332 to 408 (AKEGAERVER…HSVVFATVWV (77 aa)) are SAW.

Belongs to the GRAS family. As to expression, expressed in seedlings, leaves and flowers.

The protein resides in the nucleus. Probable transcription factor involved in plant development. The chain is Scarecrow-like protein 32 (SCL32) from Arabidopsis thaliana (Mouse-ear cress).